Here is a 254-residue protein sequence, read N- to C-terminus: Ciliary microtubule associated protein 1A (254 aa).

STPGR repeat units lie at residues 180-205 (PGPA…MAAR) and 216-241 (PGPG…FGIK). The disordered stretch occupies residues 207–226 (EPPGDKTLKPGPGAHSPEKV).

This sequence belongs to the CIMAP family. Microtubule inner protein component of sperm flagellar doublet microtubules.

The protein localises to the cytoplasm. It is found in the cytoskeleton. It localises to the flagellum axoneme. Functionally, outer dense fibers are filamentous structures located on the outside of the axoneme in the midpiece and principal piece of the mammalian sperm tail. May help to maintain the passive elastic structures and elastic recoil of the sperm tail. This Bos taurus (Bovine) protein is Ciliary microtubule associated protein 1A (CIMAP1A).